The following is a 254-amino-acid chain: UPF0246 protein FTF1693c (254 aa).

The protein belongs to the UPF0246 family.

This chain is UPF0246 protein FTF1693c, found in Francisella tularensis subsp. tularensis (strain FSC 198).